A 1352-amino-acid polypeptide reads, in one-letter code: Inhibitor of Bruton tyrosine kinase (1352 aa).

2 ANK repeats span residues 51-80 (FGRNAGHLASSCGKKGVLDWLIEKGVDLLV) and 85-114 (SGWTALHRSVFYGHIDCVWSLLKHGVSLYM). RCC1 repeat units lie at residues 141-194 (PTEV…FLSQ), 195-246 (KGQV…VLTD), and 248-301 (GCVY…LWTR). The BTB 1 domain maps to 565–645 (HDVTFQVGNR…MYTDTCDLLT (81 aa)). The segment at 692–716 (AHTLSERQKSKPKSSKKGKGVGDDD) is disordered. The segment covering 701–710 (SKPKSSKKGK) has biased composition (basic residues). The BTB 2 domain occupies 769–837 (YDVTMKSVDG…LYTDEAVVIK (69 aa)). Residues 976-1002 (FKKAKTRAKKKPRKRSDSSGGYTLSDV) form a disordered region. Residues 977–989 (KKAKTRAKKKPRK) are compositionally biased toward basic residues. Ser-991 bears the Phosphoserine mark. A compositionally biased stretch (polar residues) spans 993 to 1002 (SSGGYTLSDV). Residues Ser-1005, Ser-1031, Ser-1034, Ser-1040, Ser-1046, Ser-1055, Ser-1084, Ser-1111, Ser-1113, and Ser-1116 each carry the phosphoserine modification. Positions 1032–1094 (EGSYAGVASP…PTTKSAPQFI (63 aa)) are disordered. Over residues 1084 to 1094 (SPTTKSAPQFI) the composition is skewed to polar residues.

As to quaternary structure, interacts with the PH domain of BTK.

The protein localises to the cytoplasm. It localises to the membrane. Acts as an inhibitor of BTK tyrosine kinase activity, thereby playing a role in B-cell development. Down-regulates BTK kinase activity, leading to interference with BTK-mediated calcium mobilization and NF-kappa-B-driven transcription. The protein is Inhibitor of Bruton tyrosine kinase (Ibtk) of Mus musculus (Mouse).